We begin with the raw amino-acid sequence, 159 residues long: Dihydrofolate reductase (159 aa).

The DHFR domain maps to 2–157 (TLSILVAHDL…IPHTFLHLIR (156 aa)). Substrate is bound at residue 6-8 (LVA). Residues 7-8 (VA) and 15-20 (IGFENQ) each bind NADP(+). Asp28 lines the substrate pocket. 44-47 (GRKT) is a binding site for NADP(+). Arg58 lines the substrate pocket. NADP(+) is bound by residues 63–66 (LTSD) and 93–98 (FGGQIL). Thr112 contributes to the substrate binding site.

Belongs to the dihydrofolate reductase family.

The catalysed reaction is (6S)-5,6,7,8-tetrahydrofolate + NADP(+) = 7,8-dihydrofolate + NADPH + H(+). Its pathway is cofactor biosynthesis; tetrahydrofolate biosynthesis; 5,6,7,8-tetrahydrofolate from 7,8-dihydrofolate: step 1/1. Key enzyme in folate metabolism. Catalyzes an essential reaction for de novo glycine and purine synthesis, and for DNA precursor synthesis. This chain is Dihydrofolate reductase (folA), found in Staphylococcus aureus (strain MW2).